A 562-amino-acid polypeptide reads, in one-letter code: Dihydroxy-acid dehydratase (562 aa).

A [2Fe-2S] cluster-binding site is contributed by Cys53. Asp85 contributes to the Mg(2+) binding site. Residue Cys126 participates in [2Fe-2S] cluster binding. Asp127 and Lys128 together coordinate Mg(2+). Lys128 is modified (N6-carboxylysine). Cys198 contacts [2Fe-2S] cluster. Glu449 is a binding site for Mg(2+). Residue Ser475 is the Proton acceptor of the active site.

It belongs to the IlvD/Edd family. As to quaternary structure, homodimer. [2Fe-2S] cluster is required as a cofactor. It depends on Mg(2+) as a cofactor.

The enzyme catalyses (2R)-2,3-dihydroxy-3-methylbutanoate = 3-methyl-2-oxobutanoate + H2O. It carries out the reaction (2R,3R)-2,3-dihydroxy-3-methylpentanoate = (S)-3-methyl-2-oxopentanoate + H2O. It functions in the pathway amino-acid biosynthesis; L-isoleucine biosynthesis; L-isoleucine from 2-oxobutanoate: step 3/4. Its pathway is amino-acid biosynthesis; L-valine biosynthesis; L-valine from pyruvate: step 3/4. Its function is as follows. Functions in the biosynthesis of branched-chain amino acids. Catalyzes the dehydration of (2R,3R)-2,3-dihydroxy-3-methylpentanoate (2,3-dihydroxy-3-methylvalerate) into 2-oxo-3-methylpentanoate (2-oxo-3-methylvalerate) and of (2R)-2,3-dihydroxy-3-methylbutanoate (2,3-dihydroxyisovalerate) into 2-oxo-3-methylbutanoate (2-oxoisovalerate), the penultimate precursor to L-isoleucine and L-valine, respectively. In Methylococcus capsulatus (strain ATCC 33009 / NCIMB 11132 / Bath), this protein is Dihydroxy-acid dehydratase.